The chain runs to 169 residues: Probable GPI-anchored adhesin-like protein PGA22 (169 aa).

Residues Met1–Ala18 form the signal peptide. N-linked (GlcNAc...) asparagine glycosylation is found at Asn87, Asn104, Asn111, and Asn118. Residue Gly140 is the site of GPI-anchor amidated glycine attachment. The propeptide at Pro141 to Leu169 is removed in mature form.

The protein resides in the cell membrane. Functionally, putative adhesin which may be involved in cell adhesion and virulence. This is Probable GPI-anchored adhesin-like protein PGA22 (PGA22) from Candida albicans (strain SC5314 / ATCC MYA-2876) (Yeast).